Consider the following 116-residue polypeptide: MANNFRTDRVGMEIKREVNEILQKKVRDPRVQGVTITDVQMLGDLSMAKVYYTIMSNLASDNQKAQTGLEKATGTIKRELGHNLKMYKIPDLTFVKDESIEYGNKIDQMLRDLEKK.

It belongs to the RbfA family. In terms of assembly, monomer. Binds 30S ribosomal subunits, but not 50S ribosomal subunits or 70S ribosomes.

The protein resides in the cytoplasm. In terms of biological role, one of several proteins that assist in the late maturation steps of the functional core of the 30S ribosomal subunit. Associates with free 30S ribosomal subunits (but not with 30S subunits that are part of 70S ribosomes or polysomes). Required for efficient processing of 16S rRNA. May interact with the 5'-terminal helix region of 16S rRNA. The protein is Ribosome-binding factor A of Streptococcus sanguinis (strain SK36).